The primary structure comprises 152 residues: Glycine cleavage system H protein, mitochondrial (152 aa).

The N-terminal 31 residues, 1–31 (MALRMWASSTANALRLSSATRPHYSPLSRCF), are a transit peptide targeting the mitochondrion. The Lipoyl-binding domain maps to 53-135 (VATVGITDHA…YEDGWMIKVK (83 aa)). Lysine 94 is modified (N6-lipoyllysine).

Belongs to the GcvH family. In terms of assembly, the glycine cleavage system is composed of four proteins: P, T, L and H. (R)-lipoate serves as cofactor.

The protein resides in the mitochondrion. In terms of biological role, the glycine cleavage system catalyzes the degradation of glycine. The H protein shuttles the methylamine group of glycine from the P protein to the T protein. This Flaveria pubescens (Yellowtops) protein is Glycine cleavage system H protein, mitochondrial (GDCSH).